A 264-amino-acid polypeptide reads, in one-letter code: Virulence plasmid ParA family protein pGP5-D (264 aa).

9 to 16 (FKGGTGKT) contributes to the ATP binding site.

This sequence belongs to the ParA family.

In terms of biological role, required for growth within mammalian cells. In Chlamydia trachomatis, this protein is Virulence plasmid ParA family protein pGP5-D.